Here is a 185-residue protein sequence, read N- to C-terminus: uncharacterized protein (185 aa).

2 helical membrane-spanning segments follow: residues 1-21 (MMKF…LTPE) and 111-131 (FLWI…AFAW).

It to A.aeolicus aq_1900.

The protein localises to the cell membrane. This is an uncharacterized protein from Aquifex aeolicus (strain VF5).